Here is a 444-residue protein sequence, read N- to C-terminus: UDP-N-acetylmuramate--L-alanine ligase (444 aa).

Gly111–Ser117 is a binding site for ATP.

This sequence belongs to the MurCDEF family.

The protein localises to the cytoplasm. The catalysed reaction is UDP-N-acetyl-alpha-D-muramate + L-alanine + ATP = UDP-N-acetyl-alpha-D-muramoyl-L-alanine + ADP + phosphate + H(+). The protein operates within cell wall biogenesis; peptidoglycan biosynthesis. Functionally, cell wall formation. This Leuconostoc mesenteroides subsp. mesenteroides (strain ATCC 8293 / DSM 20343 / BCRC 11652 / CCM 1803 / JCM 6124 / NCDO 523 / NBRC 100496 / NCIMB 8023 / NCTC 12954 / NRRL B-1118 / 37Y) protein is UDP-N-acetylmuramate--L-alanine ligase.